The primary structure comprises 228 residues: Max-interacting protein 1 (228 aa).

2 disordered regions span residues G29 to E76 and G162 to S228. Over residues Q43–K56 the composition is skewed to basic residues. A compositionally biased stretch (polar residues) spans H57–S70. The 53-residue stretch at A67 to L119 folds into the bHLH domain. Acidic residues predominate over residues E173–S183. Polar residues predominate over residues G216–S228.

In terms of assembly, efficient DNA binding requires dimerization with another bHLH protein. Binds DNA as a heterodimer with MAX. Interacts with SMC3. Interacts with RNF17.

Its subcellular location is the nucleus. Its function is as follows. Transcriptional repressor. MXI1 binds with MAX to form a sequence-specific DNA-binding protein complex which recognizes the core sequence 5'-CAC[GA]TG-3'. MXI1 thus antagonizes MYC transcriptional activity by competing for MAX. The chain is Max-interacting protein 1 (Mxi1) from Rattus norvegicus (Rat).